The following is a 161-amino-acid chain: Small ribosomal subunit protein bS16 (161 aa).

Positions 114 to 161 (EGGPTTEATKPKKKSPAKKAKGGEGDADAAAEKVEASAEGEQTESAES) are disordered. The segment covering 124–133 (PKKKSPAKKA) has biased composition (basic residues).

It belongs to the bacterial ribosomal protein bS16 family.

This chain is Small ribosomal subunit protein bS16, found in Mycobacterium marinum (strain ATCC BAA-535 / M).